The sequence spans 130 residues: Small ribosomal subunit protein uS9 (130 aa).

The tract at residues 102 to 130 is disordered; the sequence is GFLTRDPRMKERKKYGLKKARRSPQFSKR. The span at 111 to 130 shows a compositional bias: basic residues; it reads KERKKYGLKKARRSPQFSKR.

This sequence belongs to the universal ribosomal protein uS9 family.

This chain is Small ribosomal subunit protein uS9, found in Clostridium botulinum (strain ATCC 19397 / Type A).